The following is a 240-amino-acid chain: UDP-2,3-diacylglucosamine hydrolase (240 aa).

5 residues coordinate Mn(2+): D8, H10, D41, N79, and H114. 79–80 provides a ligand contact to substrate; that stretch reads NR. Residues D122, S160, N164, K167, and H195 each coordinate substrate. Mn(2+) contacts are provided by H195 and H197.

The protein belongs to the LpxH family. Requires Mn(2+) as cofactor.

Its subcellular location is the cell inner membrane. It is found in the cytoplasm. It carries out the reaction UDP-2-N,3-O-bis[(3R)-3-hydroxytetradecanoyl]-alpha-D-glucosamine + H2O = 2-N,3-O-bis[(3R)-3-hydroxytetradecanoyl]-alpha-D-glucosaminyl 1-phosphate + UMP + 2 H(+). Its pathway is glycolipid biosynthesis; lipid IV(A) biosynthesis; lipid IV(A) from (3R)-3-hydroxytetradecanoyl-[acyl-carrier-protein] and UDP-N-acetyl-alpha-D-glucosamine: step 4/6. With respect to regulation, inhibited by a sulfonyl piperazine compound that shows antibacterial activity against E.coli; LpxH is the cellular target of this compound. Inhibited by 0.01% (or more) Triton X-100 in vitro. Functionally, hydrolyzes the pyrophosphate bond of UDP-2,3-diacylglucosamine to yield 2,3-diacylglucosamine 1-phosphate (lipid X) and UMP by catalyzing the attack of water at the alpha-P atom. Involved in the biosynthesis of lipid A, a phosphorylated glycolipid that anchors the lipopolysaccharide to the outer membrane of the cell. Is essential for E.coli growth. Does not cleave the unacylated UDP-GlcNAc, the mono-acylated UDP-3-O-(R)-3-hydroxymyristoyl-GlcNAc, and CDP-diacylglycerol. The chain is UDP-2,3-diacylglucosamine hydrolase from Escherichia coli (strain K12).